Reading from the N-terminus, the 256-residue chain is Deoxyribose-phosphate aldolase (256 aa).

The active-site Proton donor/acceptor is Asp102. The active-site Schiff-base intermediate with acetaldehyde is Lys165. Lys197 serves as the catalytic Proton donor/acceptor.

Belongs to the DeoC/FbaB aldolase family. DeoC type 2 subfamily.

It localises to the cytoplasm. The catalysed reaction is 2-deoxy-D-ribose 5-phosphate = D-glyceraldehyde 3-phosphate + acetaldehyde. It participates in carbohydrate degradation; 2-deoxy-D-ribose 1-phosphate degradation; D-glyceraldehyde 3-phosphate and acetaldehyde from 2-deoxy-alpha-D-ribose 1-phosphate: step 2/2. Catalyzes a reversible aldol reaction between acetaldehyde and D-glyceraldehyde 3-phosphate to generate 2-deoxy-D-ribose 5-phosphate. The chain is Deoxyribose-phosphate aldolase from Shewanella baltica (strain OS223).